Reading from the N-terminus, the 474-residue chain is Glutathione synthetase (474 aa).

Ala-2 is subject to N-acetylalanine. Substrate is bound at residue Arg-125. Residue Glu-144 coordinates ATP. Glu-144 and Asn-146 together coordinate Mg(2+). Substrate is bound by residues 148-151 (ISAS), 214-216 (ERN), Gln-220, and 267-270 (RDGY). ATP contacts are provided by residues Lys-305, 364-373 (KPQREGGGNN), Tyr-375, and 398-401 (MEKT). Glu-368 contacts Mg(2+). Ser-415 carries the post-translational modification Phosphoserine. ATP is bound at residue Glu-425. Arg-450 is a substrate binding site. ATP is bound by residues Lys-452 and Asp-458. 461 to 462 (VA) is a substrate binding site.

It belongs to the eukaryotic GSH synthase family. As to quaternary structure, homodimer. Requires Mg(2+) as cofactor.

The enzyme catalyses gamma-L-glutamyl-L-cysteine + glycine + ATP = glutathione + ADP + phosphate + H(+). It functions in the pathway sulfur metabolism; glutathione biosynthesis; glutathione from L-cysteine and L-glutamate: step 2/2. Its function is as follows. Catalyzes the production of glutathione from gamma-glutamylcysteine and glycine in an ATP-dependent manner. Glutathione (gamma-glutamylcysteinylglycine, GSH) is the most abundant intracellular thiol in living aerobic cells and is required for numerous processes including the protection of cells against oxidative damage, amino acid transport, the detoxification of foreign compounds, the maintenance of protein sulfhydryl groups in a reduced state and acts as a cofactor for a number of enzymes. This is Glutathione synthetase (GSS) from Macaca fascicularis (Crab-eating macaque).